A 209-amino-acid polypeptide reads, in one-letter code: Uracil phosphoribosyltransferase (209 aa).

5-phospho-alpha-D-ribose 1-diphosphate-binding positions include Arg79, Arg104, and 131 to 139 (DPMLATGVS). Residues Ile194 and 199–201 (GDA) contribute to the uracil site. Asp200 lines the 5-phospho-alpha-D-ribose 1-diphosphate pocket.

The protein belongs to the UPRTase family. Mg(2+) serves as cofactor.

The enzyme catalyses UMP + diphosphate = 5-phospho-alpha-D-ribose 1-diphosphate + uracil. The protein operates within pyrimidine metabolism; UMP biosynthesis via salvage pathway; UMP from uracil: step 1/1. With respect to regulation, allosterically activated by GTP. Its function is as follows. Catalyzes the conversion of uracil and 5-phospho-alpha-D-ribose 1-diphosphate (PRPP) to UMP and diphosphate. This Thermotoga neapolitana (strain ATCC 49049 / DSM 4359 / NBRC 107923 / NS-E) protein is Uracil phosphoribosyltransferase.